A 248-amino-acid chain; its full sequence is PF03932 family protein CutC (248 aa).

The protein belongs to the CutC family. In terms of assembly, homodimer.

The protein resides in the cytoplasm. This chain is PF03932 family protein CutC, found in Salmonella typhimurium (strain LT2 / SGSC1412 / ATCC 700720).